We begin with the raw amino-acid sequence, 169 residues long: Large ribosomal subunit protein uL10 (169 aa).

This sequence belongs to the universal ribosomal protein uL10 family. As to quaternary structure, part of the ribosomal stalk of the 50S ribosomal subunit. The N-terminus interacts with L11 and the large rRNA to form the base of the stalk. The C-terminus forms an elongated spine to which L12 dimers bind in a sequential fashion forming a multimeric L10(L12)X complex.

In terms of biological role, forms part of the ribosomal stalk, playing a central role in the interaction of the ribosome with GTP-bound translation factors. The polypeptide is Large ribosomal subunit protein uL10 (Orientia tsutsugamushi (strain Ikeda) (Rickettsia tsutsugamushi)).